A 316-amino-acid chain; its full sequence is DNA-directed RNA polymerase III subunit RPC6 (316 aa).

Alanine 2 is subject to N-acetylalanine. Glycyl lysine isopeptide (Lys-Gly) (interchain with G-Cter in SUMO2) cross-links involve residues lysine 5 and lysine 7. 4 residues coordinate [4Fe-4S] cluster: cysteine 287, cysteine 290, cysteine 296, and cysteine 307.

It belongs to the eukaryotic RPC34/RPC39 RNA polymerase subunit family. Component of the RNA polymerase III complex consisting of 17 subunits: a ten-subunit horseshoe-shaped catalytic core composed of POLR3A/RPC1, POLR3B/RPC2, POLR1C/RPAC1, POLR1D/RPAC2, POLR3K/RPC10, POLR2E/RPABC1, POLR2F/RPABC2, POLR2H/RPABC3, POLR2K/RPABC4 and POLR2L/RPABC5; a mobile stalk composed of two subunits POLR3H/RPC8 and CRCP/RPC9, protruding from the core and functioning primarily in transcription initiation; and additional subunits homologous to general transcription factors of the RNA polymerase II machinery, POLR3C/RPC3-POLR3F/RPC6-POLR3G/RPC7 heterotrimer required for transcription initiation and POLR3D/RPC4-POLR3E/RPC5 heterodimer involved in both transcription initiation and termination. Directly interacts with POLR3C. Interacts with TBP and TFIIIB90 and GTF3C4. Interacts with MAF1. As part of the RNA polymerase III complex, interacts with PKP2.

Its subcellular location is the nucleus. Its function is as follows. DNA-dependent RNA polymerase catalyzes the transcription of DNA into RNA using the four ribonucleoside triphosphates as substrates. Specific peripheric component of RNA polymerase III (Pol III) which synthesizes small non-coding RNAs including 5S rRNA, snRNAs, tRNAs and miRNAs from at least 500 distinct genomic loci. Part of POLR3C/RPC3-POLR3F/RPC6-POLR3G/RPC7 heterotrimer that coordinates the dynamics of Pol III stalk and clamp modules during the transition from apo to elongation state. Pol III plays a key role in sensing and limiting infection by intracellular bacteria and DNA viruses, including varicella zoster virus. Acts as a nuclear and cytosolic DNA sensor detecting AT-rich DNA, involved in innate immune response. Can sense non-self dsDNA that serves as template for transcription into dsRNA. The non-self RNA polymerase III transcripts, such as Epstein-Barr virus-encoded RNAs (EBERs) induce type I interferon and NF-kappa-B through the RIG-I pathway. Preferentially binds double-stranded DNA (dsDNA). This chain is DNA-directed RNA polymerase III subunit RPC6 (POLR3F), found in Bos taurus (Bovine).